A 674-amino-acid chain; its full sequence is Fidgetin-like protein 1 (674 aa).

Residues 157–179 (SQESDSLPNSAHDRDRTQDFPES) form a disordered region. Basic and acidic residues predominate over residues 167–179 (AHDRDRTQDFPES). Lys225 participates in a covalent cross-link: Glycyl lysine isopeptide (Lys-Gly) (interchain with G-Cter in SUMO2). Phosphoserine is present on Ser259. The necessary and sufficient for interaction with RAD51 stretch occupies residues 295-344 (FKTAKEQLWVDQQKKYHQPQRASGSSYGGVKKSLGASRSRGILGKFVPPI). The residue at position 339 (Lys339) is an N6-acetyllysine. Residues Ala404 and 444–449 (GTGKTL) contribute to the ATP site.

This sequence belongs to the AAA ATPase family. Hexamer. Interacts (via N-terminal one-half region) with RAD51; the interaction is direct. Interacts (via N-terminal one-half region) with SPIDR (via the C-terminal region); the interaction is direct. Interacts with FIRRM; may regulate homologous recombination. Mg(2+) is required as a cofactor.

Its subcellular location is the nucleus. The protein resides in the cytoplasm. The protein localises to the perinuclear region. It catalyses the reaction ATP + H2O = ADP + phosphate + H(+). Involved in DNA double-strand break (DBS) repair via homologous recombination (HR). Recruited at DSB sites independently of BRCA2, RAD51 and RAD51 paralogs in a H2AX-dependent manner. May regulate osteoblast proliferation and differentiation. May play a role in the control of male meiosis dynamic. This chain is Fidgetin-like protein 1 (FIGNL1), found in Homo sapiens (Human).